The following is a 161-amino-acid chain: MPQVQSWFPVQKQPTLAVTFTPLPQLSHAHLPLPPSHLVTKTDAMFQHQLLPTQLQPFPPSHTPLLLLLTVTTMAVTPRLSLLNVLKKLQQPPFLQNHTLLLPLLTVTTTAVTPRLSLPRLPNKHHWPLAQSPSLLLQLLILLLPAPSLVLSFNPKVWLLV.

This is an uncharacterized protein from Saccharomyces cerevisiae (strain ATCC 204508 / S288c) (Baker's yeast).